We begin with the raw amino-acid sequence, 427 residues long: 3-isopropylmalate dehydratase large subunit (427 aa).

Cys308, Cys368, and Cys371 together coordinate [4Fe-4S] cluster.

Belongs to the aconitase/IPM isomerase family. LeuC type 2 subfamily. Heterodimer of LeuC and LeuD. [4Fe-4S] cluster is required as a cofactor.

It carries out the reaction (2R,3S)-3-isopropylmalate = (2S)-2-isopropylmalate. The protein operates within amino-acid biosynthesis; L-leucine biosynthesis; L-leucine from 3-methyl-2-oxobutanoate: step 2/4. Its function is as follows. Catalyzes the isomerization between 2-isopropylmalate and 3-isopropylmalate, via the formation of 2-isopropylmaleate. The polypeptide is 3-isopropylmalate dehydratase large subunit (Citrifermentans bemidjiense (strain ATCC BAA-1014 / DSM 16622 / JCM 12645 / Bem) (Geobacter bemidjiensis)).